The sequence spans 593 residues: A-type ATP synthase subunit A (593 aa).

236-243 (GPFGSGKT) is a binding site for ATP.

The protein belongs to the ATPase alpha/beta chains family. In terms of assembly, has multiple subunits with at least A(3), B(3), C, D, E, F, H, I and proteolipid K(x).

The protein localises to the cell membrane. It carries out the reaction ATP + H2O + 4 H(+)(in) = ADP + phosphate + 5 H(+)(out). Its function is as follows. Produces ATP from ADP in the presence of a proton gradient across the membrane. The archaeal alpha chain is a catalytic subunit. In terms of biological role, component of the A-type ATP synthase that produces ATP from ADP in the presence of a proton gradient across the membrane. The A chain is the catalytic subunit. This Pyrobaculum aerophilum (strain ATCC 51768 / DSM 7523 / JCM 9630 / CIP 104966 / NBRC 100827 / IM2) protein is A-type ATP synthase subunit A.